A 430-amino-acid chain; its full sequence is Tyrosine--tRNA ligase (430 aa).

Tyr36 is an L-tyrosine binding site. A 'HIGH' region motif is present at residues 41–50; that stretch reads PTASSLHVGS. The L-tyrosine site is built by Tyr170 and Gln174. A 'KMSKS' region motif is present at residues 230–234; that stretch reads KMGKT. ATP is bound at residue Lys233. One can recognise an S4 RNA-binding domain in the interval 362–427; that stretch reads VPAFELFDEI…GKKNYHRLVL (66 aa).

It belongs to the class-I aminoacyl-tRNA synthetase family. TyrS type 1 subfamily. As to quaternary structure, homodimer.

It localises to the cytoplasm. The enzyme catalyses tRNA(Tyr) + L-tyrosine + ATP = L-tyrosyl-tRNA(Tyr) + AMP + diphosphate + H(+). Catalyzes the attachment of tyrosine to tRNA(Tyr) in a two-step reaction: tyrosine is first activated by ATP to form Tyr-AMP and then transferred to the acceptor end of tRNA(Tyr). The chain is Tyrosine--tRNA ligase from Desulfatibacillum aliphaticivorans.